Consider the following 660-residue polypeptide: MKAVIFAYHDMGCQGVQAVLDAGYEIAAIFTHADNPAENTFFGSVSRLAAELGIPVYAPDNVNHPIWVDRIAELAPDIIFSFYYRNLLSEEILHLAPAGAFNLHGSLLPAYRGRAPLNWVLVNGESETGVTLHRMVKRADAGEIVASQRVAIAQDDVALTLHHKLCQAARQLLNSILPTMKCGDIPSVPQRESDATYYGRRRPEDGLIDWHKPVSTVHNLVRAVAAPWPGAFSYNGSQKFTIWSSRICPDAQGALPGSVISVSPLRVACADGALEIITGQAGDGITVQGSQLAQTLGLVAGARLNRPPATSGKRRIRVLILGVNGFIGNHLTERLLNEENYEVYGMDIGSNAISRFLLHPRFHFVEGDISIHSEWIEYHVKKCDVVLPLVAIATPIEYTRNPLRVFELDFEENLRIIRYCVKYRKRVVFPSTSEVYGMCTDASFDEDKSNLIVGPVNKPRWIYSVSKQLLDRVIWAYGEKEGLRFTLFRPFNWMGPRLDSLNAARIGSSRAITQLILNLVEGTPIKLIDGGQQKRCFTDIRDGIEALFRIIVNDGDRCDGKIINIGNPDNEASIQELATLLLDSFDKHPLRCHFPPFAGFQVVESRSYYGKGYQDVAHRKPSIDNARRCLDWEPSIAMRDTVEETLDFFLRSVDIAERAS.

The interval 1 to 304 is formyltransferase ArnAFT; the sequence is MKAVIFAYHD…TLGLVAGARL (304 aa). H104 functions as the Proton donor; for formyltransferase activity in the catalytic mechanism. (6R)-10-formyltetrahydrofolate-binding positions include R114 and 136 to 140; that span reads VKRAD. The dehydrogenase ArnADH stretch occupies residues 314–660; that stretch reads RRIRVLILGV…RSVDIAERAS (347 aa). NAD(+)-binding positions include D347 and 368–369; that span reads DI. UDP-alpha-D-glucuronate is bound by residues A393, Y398, and 432–433; that span reads TS. E434 (proton acceptor; for decarboxylase activity) is an active-site residue. Residues R460, N492, 526-535, and Y613 contribute to the UDP-alpha-D-glucuronate site; that span reads KLIDGGQQKR. The active-site Proton donor; for decarboxylase activity is the R619.

It in the N-terminal section; belongs to the Fmt family. UDP-L-Ara4N formyltransferase subfamily. The protein in the C-terminal section; belongs to the NAD(P)-dependent epimerase/dehydratase family. UDP-glucuronic acid decarboxylase subfamily. In terms of assembly, homohexamer, formed by a dimer of trimers.

The enzyme catalyses UDP-alpha-D-glucuronate + NAD(+) = UDP-beta-L-threo-pentopyranos-4-ulose + CO2 + NADH. It catalyses the reaction UDP-4-amino-4-deoxy-beta-L-arabinose + (6R)-10-formyltetrahydrofolate = UDP-4-deoxy-4-formamido-beta-L-arabinose + (6S)-5,6,7,8-tetrahydrofolate + H(+). It functions in the pathway nucleotide-sugar biosynthesis; UDP-4-deoxy-4-formamido-beta-L-arabinose biosynthesis; UDP-4-deoxy-4-formamido-beta-L-arabinose from UDP-alpha-D-glucuronate: step 1/3. It participates in nucleotide-sugar biosynthesis; UDP-4-deoxy-4-formamido-beta-L-arabinose biosynthesis; UDP-4-deoxy-4-formamido-beta-L-arabinose from UDP-alpha-D-glucuronate: step 3/3. The protein operates within bacterial outer membrane biogenesis; lipopolysaccharide biosynthesis. Its function is as follows. Bifunctional enzyme that catalyzes the oxidative decarboxylation of UDP-glucuronic acid (UDP-GlcUA) to UDP-4-keto-arabinose (UDP-Ara4O) and the addition of a formyl group to UDP-4-amino-4-deoxy-L-arabinose (UDP-L-Ara4N) to form UDP-L-4-formamido-arabinose (UDP-L-Ara4FN). The modified arabinose is attached to lipid A and is required for resistance to polymyxin and cationic antimicrobial peptides. The sequence is that of Bifunctional polymyxin resistance protein ArnA from Salmonella schwarzengrund (strain CVM19633).